The primary structure comprises 374 residues: MTRFSFKIHATDGKARTGAIQMMRGEIRTPAFMPVGTAATVKAMKVEDVRASGADIILGNTYHLMLRPGAERVARLGGLHKFMGWDRPILTDSGGYQVMSLSDLRKITEEGVTFASHLDGSRHLLSPERSMEIQRLLGSDIVMCFDECPRADQPREVIARSMEMSMRWARRSRDAFDAGGEHAERSALFGIQQGALDEGLRKTSADALTDIGFDGYAIGGLAVGEGQEAMFATLDFAPQQLPADRPRYLMGVGKPDDLVGAVERGVDMFDCVLPTRSGRNGQAFTWNGPLNMRNARHAEDTGPLDERCPCPTCTKYSRAYLHHLHKSGEMLGAMLLTEHNLWFYQQLMAGMRAAIAEGRFAAFAADFRRDYFAR.

Catalysis depends on Asp-92, which acts as the Proton acceptor. Substrate-binding positions include 92 to 96 (DSGGY), Asp-146, Gln-193, and Gly-220. Residues 251 to 257 (GVGKPDD) form an RNA binding region. Residue Asp-270 is the Nucleophile of the active site. An RNA binding; important for wobble base 34 recognition region spans residues 275–279 (TRSGR). Residues Cys-308, Cys-310, Cys-313, and His-339 each contribute to the Zn(2+) site.

This sequence belongs to the queuine tRNA-ribosyltransferase family. Homodimer. Within each dimer, one monomer is responsible for RNA recognition and catalysis, while the other monomer binds to the replacement base PreQ1. The cofactor is Zn(2+).

It carries out the reaction 7-aminomethyl-7-carbaguanine + guanosine(34) in tRNA = 7-aminomethyl-7-carbaguanosine(34) in tRNA + guanine. It functions in the pathway tRNA modification; tRNA-queuosine biosynthesis. Functionally, catalyzes the base-exchange of a guanine (G) residue with the queuine precursor 7-aminomethyl-7-deazaguanine (PreQ1) at position 34 (anticodon wobble position) in tRNAs with GU(N) anticodons (tRNA-Asp, -Asn, -His and -Tyr). Catalysis occurs through a double-displacement mechanism. The nucleophile active site attacks the C1' of nucleotide 34 to detach the guanine base from the RNA, forming a covalent enzyme-RNA intermediate. The proton acceptor active site deprotonates the incoming PreQ1, allowing a nucleophilic attack on the C1' of the ribose to form the product. After dissociation, two additional enzymatic reactions on the tRNA convert PreQ1 to queuine (Q), resulting in the hypermodified nucleoside queuosine (7-(((4,5-cis-dihydroxy-2-cyclopenten-1-yl)amino)methyl)-7-deazaguanosine). This chain is Queuine tRNA-ribosyltransferase, found in Novosphingobium aromaticivorans (strain ATCC 700278 / DSM 12444 / CCUG 56034 / CIP 105152 / NBRC 16084 / F199).